Consider the following 370-residue polypeptide: Dihydroorotate dehydrogenase (quinone) (370 aa).

FMN contacts are provided by residues 67–71 (AGFDK) and Thr91. Lys71 lines the substrate pocket. 116 to 120 (NRMGF) contributes to the substrate binding site. The FMN site is built by Asn146 and Asn179. A substrate-binding site is contributed by Asn179. Residue Ser182 is the Nucleophile of the active site. Position 184 (Asn184) interacts with substrate. The FMN site is built by Lys222 and Thr250. Substrate is bound at residue 251–252 (NT). Residues Gly276, Gly305, and 326–327 (YS) each bind FMN.

The protein belongs to the dihydroorotate dehydrogenase family. Type 2 subfamily. Monomer. Requires FMN as cofactor.

It is found in the cell membrane. The enzyme catalyses (S)-dihydroorotate + a quinone = orotate + a quinol. Its pathway is pyrimidine metabolism; UMP biosynthesis via de novo pathway; orotate from (S)-dihydroorotate (quinone route): step 1/1. Its function is as follows. Catalyzes the conversion of dihydroorotate to orotate with quinone as electron acceptor. The chain is Dihydroorotate dehydrogenase (quinone) from Streptomyces griseus subsp. griseus (strain JCM 4626 / CBS 651.72 / NBRC 13350 / KCC S-0626 / ISP 5235).